A 102-amino-acid polypeptide reads, in one-letter code: Small ribosomal subunit protein uS10 (102 aa).

It belongs to the universal ribosomal protein uS10 family. As to quaternary structure, part of the 30S ribosomal subunit.

Its function is as follows. Involved in the binding of tRNA to the ribosomes. The chain is Small ribosomal subunit protein uS10 from Lactococcus lactis subsp. lactis (strain IL1403) (Streptococcus lactis).